The primary structure comprises 532 residues: Drimenyl diphosphate synthase (532 aa).

Positions 121, 122, 152, and 154 each coordinate (2E,6E)-farnesyl diphosphate. Glutamate 158 is a binding site for Mg(2+). PFTB repeat units lie at residues 275–317, 325–367, 428–469, and 475–518; these read PAAM…RVAG, IAAA…APNP, KRQA…SRDG, and LARA…CVLL. Aspartate 304 acts as the Proton donor in catalysis. A (2E,6E)-farnesyl diphosphate-binding site is contributed by arginine 502.

The protein belongs to the terpene cyclase/mutase family. It depends on Mg(2+) as a cofactor. Ni(2+) is required as a cofactor. Requires Co(2+) as cofactor.

The catalysed reaction is (2E,6E)-farnesyl diphosphate = (5S,9S,10S)-drim-7-en-11-yl diphosphate. In terms of biological role, catalyzes the cyclization of farnesyl diphosphate (FPP) to drimenyl diphosphate. The protein is Drimenyl diphosphate synthase of Streptantibioticus cattleyicolor (strain ATCC 35852 / DSM 46488 / JCM 4925 / NBRC 14057 / NRRL 8057) (Streptomyces cattleya).